A 1029-amino-acid polypeptide reads, in one-letter code: Endosome/lysosome-associated apoptosis and autophagy regulator family member 2 (1029 aa).

Positions 1 to 47 (MLFRARGPVRGRGWGRPAEAPRRGRSPPWSPAWICCWALAGCQAAWA) are cleaved as a signal peptide. The Extracellular portion of the chain corresponds to 48 to 929 (GDLPSSSSRP…TCETVDFWLK (882 aa)). An N-linked (GlcNAc...) asparagine glycan is attached at Asn-169. Intrachain disulfides connect Cys-293–Cys-310, Cys-323–Cys-346, and Cys-326–Cys-358. Asn-405 and Asn-691 each carry an N-linked (GlcNAc...) asparagine glycan. Positions 672-877 (SDCFFYHEKE…LWESAEACPL (206 aa)) constitute an MRH domain. Cystine bridges form between Cys-674–Cys-720, Cys-730–Cys-758, Cys-827–Cys-863, and Cys-839–Cys-875. Residues 930 to 950 (VGAGVGAFTAVLLVALTCYFW) traverse the membrane as a helical segment. Residues 951–1029 (KKNQKLEYKY…QLKTSRSPNI (79 aa)) are Cytoplasmic-facing. At Ser-1018 the chain carries Phosphoserine.

The protein belongs to the ELAPOR family.

It is found in the cell membrane. Its function is as follows. Functions as a regulator of the BMP signaling pathway and may be involved in epidermal differentiation. This chain is Endosome/lysosome-associated apoptosis and autophagy regulator family member 2, found in Homo sapiens (Human).